An 89-amino-acid chain; its full sequence is Small ribosomal subunit protein uS15 (89 aa).

It belongs to the universal ribosomal protein uS15 family. Part of the 30S ribosomal subunit. Forms a bridge to the 50S subunit in the 70S ribosome, contacting the 23S rRNA.

One of the primary rRNA binding proteins, it binds directly to 16S rRNA where it helps nucleate assembly of the platform of the 30S subunit by binding and bridging several RNA helices of the 16S rRNA. Functionally, forms an intersubunit bridge (bridge B4) with the 23S rRNA of the 50S subunit in the ribosome. The chain is Small ribosomal subunit protein uS15 from Nitrosospira multiformis (strain ATCC 25196 / NCIMB 11849 / C 71).